The sequence spans 467 residues: MAQAQGKIVQCIGAVVDVEFARDQMPKIYDALKMEGSALTLEVQQQLGDGIVRTIALGTSDGLRRGNTVYNTGANITVPVGKATLGRIMDVLGAPIDERGPVDQTLTAPIHRKAPAYDELSPSQELLETGIKVIDLVCPFAKGGKVGLFGGAGVGKTVNMMELINNIAKAHSGLSVFAGVGERTREGNDFYHEMADSGVVNLENLGESKVAMVYGQMNEPPGNRLRVALTGLTIAESFRDEGRDVLFFVDNIYRYTLAGTEVSALLGRMPSAVGYQPTLAEEMGRLQERITSTKVGSITSIQAVYVPADDLTDPSPATTFAHLDSTVVLSRDIASLGIYPAVDPLDSTSRQLDPNVVGEDHYATARAVQGTLQRYKELRDIIAILGMDELAPEDKLAVARARKIQRFLSQPFHVAEVFTGSPGKYVSLAETIRGFKMIVAGECDHLPEQAFYMVGTIDEAFEKAKKV.

150–157 serves as a coordination point for ATP; that stretch reads GGAGVGKT.

This sequence belongs to the ATPase alpha/beta chains family. F-type ATPases have 2 components, CF(1) - the catalytic core - and CF(0) - the membrane proton channel. CF(1) has five subunits: alpha(3), beta(3), gamma(1), delta(1), epsilon(1). CF(0) has three main subunits: a(1), b(2) and c(9-12). The alpha and beta chains form an alternating ring which encloses part of the gamma chain. CF(1) is attached to CF(0) by a central stalk formed by the gamma and epsilon chains, while a peripheral stalk is formed by the delta and b chains.

The protein resides in the cell inner membrane. It catalyses the reaction ATP + H2O + 4 H(+)(in) = ADP + phosphate + 5 H(+)(out). Its function is as follows. Produces ATP from ADP in the presence of a proton gradient across the membrane. The catalytic sites are hosted primarily by the beta subunits. The protein is ATP synthase subunit beta of Polaromonas sp. (strain JS666 / ATCC BAA-500).